Reading from the N-terminus, the 356-residue chain is Cyanuric acid amidohydrolase (356 aa).

The RU A stretch occupies residues Met-1 to Asn-99. Substrate contacts are provided by residues Arg-52 and Ser-79–Gly-80. An RU B region spans residues Ala-106–Glu-243. Residue Lys-156 is part of the active site. Substrate contacts are provided by residues Arg-188 and Ser-226–Ser-227. The Nucleophile role is filled by Ser-226. The interval Leu-249–Gly-356 is RU C. Residue Glu-287 participates in Mg(2+) binding. Residues Arg-314 and Ser-333–Gly-334 contribute to the substrate site. 5 residues coordinate Mg(2+): Gly-336, Gln-339, Gly-340, Pro-341, and Gly-344.

The protein belongs to the cyclic amide hydrolase (CyAH) family. Homotetramer.

It carries out the reaction cyanurate + H2O = 1-carboxybiuret + H(+). Its pathway is xenobiotic degradation; atrazine degradation; biuret from cyanurate: step 1/1. Its activity is regulated as follows. Inhibited by barbituric acid. Its function is as follows. Responsible for the hydrolysis of cyanuric acid, an intermediate formed during catabolism of s-triazine based compounds in herbicides such as atrazine and polymers such as melamine. Catalyzes the hydrolytic opening of the s-triazine ring of cyanuric acid (2,4,6-trihydroxy-s-triazine) to yield carbon dioxide and carboxybiuret, which spontaneously decarboxylates to biuret. The polypeptide is Cyanuric acid amidohydrolase (Azorhizobium caulinodans (strain ATCC 43989 / DSM 5975 / JCM 20966 / LMG 6465 / NBRC 14845 / NCIMB 13405 / ORS 571)).